The primary structure comprises 130 residues: Small ribosomal subunit protein uS11c (130 aa).

This sequence belongs to the universal ribosomal protein uS11 family. As to quaternary structure, part of the 30S ribosomal subunit.

The protein resides in the plastid. It localises to the chloroplast. In Spirogyra maxima (Green alga), this protein is Small ribosomal subunit protein uS11c.